Reading from the N-terminus, the 202-residue chain is Na(+)-translocating NADH-quinone reductase subunit E (202 aa).

6 consecutive transmembrane segments (helical) span residues 11–31 (AVFV…FIAI), 35–55 (VETA…TMPV), 79–99 (LSFL…QILE), 114–134 (GVFL…LFMV), 144–164 (TVYG…LAGI), and 180–200 (LGIT…FSGV).

The protein belongs to the NqrDE/RnfAE family. In terms of assembly, composed of six subunits; NqrA, NqrB, NqrC, NqrD, NqrE and NqrF.

It is found in the cell inner membrane. The catalysed reaction is a ubiquinone + n Na(+)(in) + NADH + H(+) = a ubiquinol + n Na(+)(out) + NAD(+). Its function is as follows. NQR complex catalyzes the reduction of ubiquinone-1 to ubiquinol by two successive reactions, coupled with the transport of Na(+) ions from the cytoplasm to the periplasm. NqrA to NqrE are probably involved in the second step, the conversion of ubisemiquinone to ubiquinol. This Ectopseudomonas mendocina (strain ymp) (Pseudomonas mendocina) protein is Na(+)-translocating NADH-quinone reductase subunit E.